A 339-amino-acid chain; its full sequence is Uroporphyrinogen decarboxylase (339 aa).

Substrate is bound by residues 21 to 25, aspartate 71, tyrosine 147, serine 202, and histidine 315; that span reads RQAGR.

This sequence belongs to the uroporphyrinogen decarboxylase family. In terms of assembly, homodimer.

It localises to the cytoplasm. The catalysed reaction is uroporphyrinogen III + 4 H(+) = coproporphyrinogen III + 4 CO2. Its pathway is porphyrin-containing compound metabolism; protoporphyrin-IX biosynthesis; coproporphyrinogen-III from 5-aminolevulinate: step 4/4. Its function is as follows. Catalyzes the decarboxylation of four acetate groups of uroporphyrinogen-III to yield coproporphyrinogen-III. The polypeptide is Uroporphyrinogen decarboxylase (Helicobacter pylori (strain G27)).